Reading from the N-terminus, the 514-residue chain is 2,3-bisphosphoglycerate-independent phosphoglycerate mutase (514 aa).

Residues aspartate 13 and serine 63 each contribute to the Mn(2+) site. The Phosphoserine intermediate role is filled by serine 63. Substrate-binding positions include histidine 124, 154 to 155 (RD), arginine 186, arginine 192, 258 to 261 (RADR), and lysine 332. Mn(2+)-binding residues include aspartate 399, histidine 403, aspartate 440, histidine 441, and histidine 459.

This sequence belongs to the BPG-independent phosphoglycerate mutase family. In terms of assembly, monomer. Mn(2+) serves as cofactor.

The enzyme catalyses (2R)-2-phosphoglycerate = (2R)-3-phosphoglycerate. Its pathway is carbohydrate degradation; glycolysis; pyruvate from D-glyceraldehyde 3-phosphate: step 3/5. Catalyzes the interconversion of 2-phosphoglycerate and 3-phosphoglycerate. The protein is 2,3-bisphosphoglycerate-independent phosphoglycerate mutase of Legionella pneumophila subsp. pneumophila (strain Philadelphia 1 / ATCC 33152 / DSM 7513).